A 132-amino-acid polypeptide reads, in one-letter code: Agouti-signaling protein (132 aa).

Positions 1-22 (MDVTRLLLATLLVFLCFFTADS) are cleaved as a signal peptide. Asparagine 39 carries N-linked (GlcNAc...) asparagine glycosylation. Residues 62–85 (ISRKEAEKKRSSKKEASMKTVARP) are disordered. Basic and acidic residues predominate over residues 63–78 (SRKEAEKKRSSKKEAS). Intrachain disulfides connect cysteine 93–cysteine 108, cysteine 100–cysteine 114, cysteine 107–cysteine 125, cysteine 111–cysteine 132, and cysteine 116–cysteine 123. In terms of domain architecture, Agouti spans 93–132 (CVATRNSCKPPAPACCDPCASCQCRFFRSACSCRVLSLNC).

The protein resides in the secreted. Functionally, involved in the regulation of melanogenesis. The binding of ASP to MC1R precludes alpha-MSH initiated signaling and thus blocks production of cAMP, leading to a down-regulation of eumelanogenesis (brown/black pigment) and thus increasing synthesis of pheomelanin (yellow/red pigment). The polypeptide is Agouti-signaling protein (ASIP) (Pongo pygmaeus (Bornean orangutan)).